The sequence spans 365 residues: Putative glutamate--cysteine ligase 2-2 (365 aa).

It belongs to the glutamate--cysteine ligase type 2 family. YbdK subfamily.

The catalysed reaction is L-cysteine + L-glutamate + ATP = gamma-L-glutamyl-L-cysteine + ADP + phosphate + H(+). Its function is as follows. ATP-dependent carboxylate-amine ligase which exhibits weak glutamate--cysteine ligase activity. This is Putative glutamate--cysteine ligase 2-2 from Mycolicibacterium vanbaalenii (strain DSM 7251 / JCM 13017 / BCRC 16820 / KCTC 9966 / NRRL B-24157 / PYR-1) (Mycobacterium vanbaalenii).